The sequence spans 353 residues: Rhodopsin (353 aa).

The Extracellular segment spans residues 1 to 36; the sequence is MNGTEGPFFYVPMVNTTGIVRSPYDYPQYYLVSPAA. Asparagine 2 and asparagine 15 each carry an N-linked (GlcNAc...) asparagine glycan. The helical transmembrane segment at 37 to 61 threads the bilayer; that stretch reads YAALGAYMFLLILLGFPINFLTLYV. Topologically, residues 62–73 are cytoplasmic; the sequence is TIEHKKLRTPLN. A helical transmembrane segment spans residues 74-96; it reads YILLNLAVADLFMVFGGFTTTMY. At 97-110 the chain is on the extracellular side; it reads TSMHGYFVLGRLGC. A disulfide bridge connects residues cysteine 110 and cysteine 187. A helical transmembrane segment spans residues 111-133; the sequence is NMEGFFATLGGEIGLWSLVVLAV. The short motif at 134 to 136 is the 'Ionic lock' involved in activated form stabilization element; that stretch reads ERW. Topologically, residues 134-152 are cytoplasmic; that stretch reads ERWLVVCKPISNFRFGENH. A helical membrane pass occupies residues 153–173; that stretch reads AIMGLAFTWVMACSCAVPPLV. At 174 to 202 the chain is on the extracellular side; it reads GWSRYIPEGMQCSCGVDYYTRAEGFNNES. Residue asparagine 200 is glycosylated (N-linked (GlcNAc...) asparagine). A helical membrane pass occupies residues 203–224; it reads FVIYMFACHFIIPMCVVFFCYG. Topologically, residues 225-252 are cytoplasmic; it reads RLLCAVKEAAAAQQESETTQRAEKEVTR. A helical membrane pass occupies residues 253–274; sequence MVVIMGIAFLICWCPYASVAWY. Topologically, residues 275–286 are extracellular; sequence IFTHQGSEFGPV. A helical membrane pass occupies residues 287–308; that stretch reads FMTLPAFFAKTSSVYNPLIYIL. The residue at position 296 (lysine 296) is an N6-(retinylidene)lysine. Topologically, residues 309–353 are cytoplasmic; sequence MNKQFRHCMITTLCCGKNPFEEEEGASTASKTEASSVSSSSVSPA. Residues cysteine 322 and cysteine 323 are each lipidated (S-palmitoyl cysteine). Residues 331–353 are disordered; sequence EEGASTASKTEASSVSSSSVSPA. Low complexity predominate over residues 334 to 353; sequence ASTASKTEASSVSSSSVSPA.

The protein belongs to the G-protein coupled receptor 1 family. Opsin subfamily. Phosphorylated on some or all of the serine and threonine residues present in the C-terminal region. In terms of processing, contains one covalently linked retinal chromophore.

The protein resides in the membrane. The protein localises to the cell projection. It is found in the cilium. It localises to the photoreceptor outer segment. In terms of biological role, photoreceptor required for image-forming vision at low light intensity. While most salt water fish species use retinal as chromophore, most freshwater fish use 3-dehydroretinal, or a mixture of retinal and 3-dehydroretinal. Light-induced isomerization of 11-cis to all-trans retinal triggers a conformational change that activates signaling via G-proteins. Subsequent receptor phosphorylation mediates displacement of the bound G-protein alpha subunit by arrestin and terminates signaling. This Dicentrarchus labrax (European seabass) protein is Rhodopsin (rho).